Here is a 484-residue protein sequence, read N- to C-terminus: HSPB1-associated protein 1 (484 aa).

Positions 1 to 26 (MAARPGAITNADSASGGGEEEGKHVK) are disordered. Positions 88-208 (ETACNYVEAT…EDTPFLYPTR (121 aa)) are interaction with HSPB1. The JmjC domain occupies 124–288 (WAYADYKYFV…HQTRVEEAIT (165 aa)). The segment at 396 to 429 (TPSSEEPSSERGGIFENDGEDFVSKNGKSFGKRQ) is disordered.

Interacts with CRYAB and HSPB1.

It is found in the cytoplasm. May play a role in cellular stress response. The sequence is that of HSPB1-associated protein 1 (HSPBAP1) from Bos taurus (Bovine).